The following is a 185-amino-acid chain: Threonylcarbamoyl-AMP synthase (185 aa).

The 185-residue stretch at Met-1 to Gly-185 folds into the YrdC-like domain. A disordered region spans residues Glu-163–Gly-185. Positions Thr-164–Lys-177 are enriched in basic and acidic residues.

This sequence belongs to the SUA5 family. TsaC subfamily.

The protein localises to the cytoplasm. The catalysed reaction is L-threonine + hydrogencarbonate + ATP = L-threonylcarbamoyladenylate + diphosphate + H2O. In terms of biological role, required for the formation of a threonylcarbamoyl group on adenosine at position 37 (t(6)A37) in tRNAs that read codons beginning with adenine. Catalyzes the conversion of L-threonine, HCO(3)(-)/CO(2) and ATP to give threonylcarbamoyl-AMP (TC-AMP) as the acyladenylate intermediate, with the release of diphosphate. The chain is Threonylcarbamoyl-AMP synthase from Vibrio parahaemolyticus serotype O3:K6 (strain RIMD 2210633).